A 57-amino-acid chain; its full sequence is Small ribosomal subunit protein bS21 (57 aa).

The protein belongs to the bacterial ribosomal protein bS21 family.

The chain is Small ribosomal subunit protein bS21 from Phytoplasma australiense.